Reading from the N-terminus, the 158-residue chain is Snaclec mucrocetin subunit alpha (158 aa).

Positions 1-23 are cleaved as a signal peptide; it reads MGRFIFVSFGLLVVFLSLSGTGA. Intrachain disulfides connect Cys-27/Cys-38, Cys-55/Cys-152, and Cys-127/Cys-144. In terms of domain architecture, C-type lectin spans 34–153; that stretch reads YDRYCYQAFS…CGRENPFVCK (120 aa).

It belongs to the snaclec family. Tetramer of heterodimers of alpha and beta subunits (alphabeta)(4); disulfide-linked. In terms of tissue distribution, expressed by the venom gland.

It is found in the secreted. Its function is as follows. Platelet-agglutinating factor that acts in a vWF-independent manner. Binds specifically to platelet GPIbalpha (GP1BA) to a distinct binding site from that of flavocetin-A. This chain is Snaclec mucrocetin subunit alpha, found in Protobothrops mucrosquamatus (Taiwan habu).